We begin with the raw amino-acid sequence, 360 residues long: Glycoprotein-N-acetylgalactosamine 3-beta-galactosyltransferase 1 (360 aa).

The Cytoplasmic segment spans residues 1–7 (MSIICAK). Residues 8–28 (VAWLPLTLGTAMGFLITFYLA) form a helical; Signal-anchor for type II membrane protein membrane-spanning segment. Over 29 to 360 (RTLLERNSQP…SDFLEPPMES (332 aa)) the chain is Lumenal. Cys-79 and Cys-103 are disulfide-bonded. The UDP site is built by Met-82, Glu-126, Gly-127, Arg-128, and Lys-134. An N-linked (GlcNAc...) asparagine glycan is attached at Asn-148. Asp-157 is a UDP binding site. Mn(2+) is bound by residues Asp-157 and Asp-159. The N-linked (GlcNAc...) asparagine glycan is linked to Asn-173. Cys-220 and Cys-234 are disulfide-bonded. A glycoprotein is bound at residue Trp-274. A disulfide bridge connects residues Cys-289 and Cys-290. His-298 and Tyr-299 together coordinate UDP. A Mn(2+)-binding site is contributed by His-298. N-linked (GlcNAc...) asparagine glycosylation is found at Asn-341 and Asn-347.

Belongs to the glycosyltransferase 31 family. Beta3-Gal-T subfamily. Homodimer; disulfide-linked. The cofactor is Mn(2+).

It is found in the membrane. The enzyme catalyses an N-acetyl-alpha-D-galactosaminyl derivative + UDP-alpha-D-galactose = a beta-D-galactosyl-(1-&gt;3)-N-acetyl-alpha-D-galactosaminyl derivative + UDP + H(+). It functions in the pathway protein modification; protein glycosylation. In terms of biological role, glycosyltransferase that generates the core 1 O-glycan Gal-beta1-3GalNAc-alpha1-Ser/Thr (T antigen), which is a precursor for many extended O-glycans in glycoproteins. The protein is Glycoprotein-N-acetylgalactosamine 3-beta-galactosyltransferase 1 (c1galt1) of Xenopus laevis (African clawed frog).